The following is a 103-amino-acid chain: Pyrimidine/purine nucleoside phosphorylase (103 aa).

This sequence belongs to the nucleoside phosphorylase PpnP family.

It carries out the reaction a purine D-ribonucleoside + phosphate = a purine nucleobase + alpha-D-ribose 1-phosphate. It catalyses the reaction adenosine + phosphate = alpha-D-ribose 1-phosphate + adenine. The enzyme catalyses cytidine + phosphate = cytosine + alpha-D-ribose 1-phosphate. The catalysed reaction is guanosine + phosphate = alpha-D-ribose 1-phosphate + guanine. It carries out the reaction inosine + phosphate = alpha-D-ribose 1-phosphate + hypoxanthine. It catalyses the reaction thymidine + phosphate = 2-deoxy-alpha-D-ribose 1-phosphate + thymine. The enzyme catalyses uridine + phosphate = alpha-D-ribose 1-phosphate + uracil. The catalysed reaction is xanthosine + phosphate = alpha-D-ribose 1-phosphate + xanthine. Catalyzes the phosphorolysis of diverse nucleosides, yielding D-ribose 1-phosphate and the respective free bases. Can use uridine, adenosine, guanosine, cytidine, thymidine, inosine and xanthosine as substrates. Also catalyzes the reverse reactions. In Dechloromonas aromatica (strain RCB), this protein is Pyrimidine/purine nucleoside phosphorylase.